Reading from the N-terminus, the 254-residue chain is Alcohol dehydrogenase (254 aa).

Residue 10 to 33 (FVAGLGGIGLDTSREIVKSGPKNL) participates in NAD(+) binding. Residue serine 138 participates in substrate binding. Tyrosine 151 serves as the catalytic Proton acceptor.

This sequence belongs to the short-chain dehydrogenases/reductases (SDR) family. In terms of assembly, homodimer.

It carries out the reaction a primary alcohol + NAD(+) = an aldehyde + NADH + H(+). The catalysed reaction is a secondary alcohol + NAD(+) = a ketone + NADH + H(+). This Drosophila borealis (Fruit fly) protein is Alcohol dehydrogenase (Adh).